The primary structure comprises 98 residues: NADH-ubiquinone oxidoreductase chain 4L (98 aa).

3 helical membrane-spanning segments follow: residues 2–22 (PPIFTNVILAFATAFLGTLIF), 29–49 (SLLCLEGMMLSLFILSTLIIL), and 61–81 (ILLLVFAACEAAIGLALLVMV).

It belongs to the complex I subunit 4L family. Core subunit of respiratory chain NADH dehydrogenase (Complex I) which is composed of 45 different subunits.

It localises to the mitochondrion inner membrane. It catalyses the reaction a ubiquinone + NADH + 5 H(+)(in) = a ubiquinol + NAD(+) + 4 H(+)(out). In terms of biological role, core subunit of the mitochondrial membrane respiratory chain NADH dehydrogenase (Complex I) which catalyzes electron transfer from NADH through the respiratory chain, using ubiquinone as an electron acceptor. Part of the enzyme membrane arm which is embedded in the lipid bilayer and involved in proton translocation. In Avahi occidentalis (Western woolly lemur), this protein is NADH-ubiquinone oxidoreductase chain 4L (MT-ND4L).